Reading from the N-terminus, the 116-residue chain is Holo-[acyl-carrier-protein] synthase (116 aa).

D8 and E50 together coordinate Mg(2+).

The protein belongs to the P-Pant transferase superfamily. AcpS family. The cofactor is Mg(2+).

It localises to the cytoplasm. It carries out the reaction apo-[ACP] + CoA = holo-[ACP] + adenosine 3',5'-bisphosphate + H(+). In terms of biological role, transfers the 4'-phosphopantetheine moiety from coenzyme A to a Ser of acyl-carrier-protein. This Beutenbergia cavernae (strain ATCC BAA-8 / DSM 12333 / CCUG 43141 / JCM 11478 / NBRC 16432 / NCIMB 13614 / HKI 0122) protein is Holo-[acyl-carrier-protein] synthase.